Reading from the N-terminus, the 704-residue chain is SH3KBP1-binding protein 1 (704 aa).

At Ala2 the chain carries N-acetylalanine. Positions Glu19–Gly88 constitute a BTB domain. The tract at residues Leu145–Pro165 is disordered. Thr163 is subject to Phosphothreonine. 5 WD repeats span residues Arg233–Glu280, Val283–Gln322, Val324–Lys359, Val428–Ser466, and Leu548–Gly586. The span at Ala611–Ser644 shows a compositional bias: low complexity. The tract at residues Ala611–Phe704 is disordered. The PXXXPR signature appears at Pro618–Arg623. 2 positions are modified to phosphoserine: Ser644 and Ser646. The PXXXPR signature appears at Pro678–Arg683.

This sequence belongs to the KCTD3 family. In terms of assembly, monomer. Interacts with CUL3; interaction is direct and forms a 5:5 heterodecamer. Interacts (via PXXXPR motifs) with SH3KBP1 (via SH3 domains). Directly interacts with cathepsin B/CTSB.

It is found in the lysosome. Its function is as follows. Inhibits CBL-SH3KBP1 complex mediated down-regulation of EGFR signaling by sequestration of SH3KBP1. Binds to SH3KBP1 and prevents its interaction with CBL and inhibits translocation of SH3KBP1 to EGFR containing vesicles upon EGF stimulation. The sequence is that of SH3KBP1-binding protein 1 (SHKBP1) from Bos taurus (Bovine).